We begin with the raw amino-acid sequence, 140 residues long: Large ribosomal subunit protein bL21 (140 aa).

Residues 106 to 140 (SGVKPAVGARTKIEPAVKPAKAKKSEAEASAEDAN) form a disordered region.

This sequence belongs to the bacterial ribosomal protein bL21 family. Part of the 50S ribosomal subunit. Contacts protein L20.

Functionally, this protein binds to 23S rRNA in the presence of protein L20. This is Large ribosomal subunit protein bL21 from Paracoccus denitrificans (strain Pd 1222).